The primary structure comprises 480 residues: UDP-N-acetylmuramate--L-alanine ligase (480 aa).

122-128 (GTHGKTT) is a binding site for ATP.

It belongs to the MurCDEF family.

It is found in the cytoplasm. It carries out the reaction UDP-N-acetyl-alpha-D-muramate + L-alanine + ATP = UDP-N-acetyl-alpha-D-muramoyl-L-alanine + ADP + phosphate + H(+). It participates in cell wall biogenesis; peptidoglycan biosynthesis. Its function is as follows. Cell wall formation. In Pseudomonas aeruginosa (strain LESB58), this protein is UDP-N-acetylmuramate--L-alanine ligase.